A 710-amino-acid chain; its full sequence is Protein-glutamine gamma-glutamyltransferase Z (710 aa).

Residues cysteine 279, histidine 338, and aspartate 361 contribute to the active site. 4 residues coordinate Ca(2+): asparagine 401, aspartate 403, glutamate 450, and glutamate 455.

This sequence belongs to the transglutaminase superfamily. Transglutaminase family. The cofactor is Ca(2+). Widely expressed.

The enzyme catalyses L-glutaminyl-[protein] + L-lysyl-[protein] = [protein]-L-lysyl-N(6)-5-L-glutamyl-[protein] + NH4(+). Its function is as follows. Catalyzes the cross-linking of proteins and the conjugation of polyamines to proteins. This chain is Protein-glutamine gamma-glutamyltransferase Z (TGM7), found in Homo sapiens (Human).